The chain runs to 149 residues: SsrA-binding protein (149 aa).

This sequence belongs to the SmpB family.

The protein localises to the cytoplasm. Its function is as follows. Required for rescue of stalled ribosomes mediated by trans-translation. Binds to transfer-messenger RNA (tmRNA), required for stable association of tmRNA with ribosomes. tmRNA and SmpB together mimic tRNA shape, replacing the anticodon stem-loop with SmpB. tmRNA is encoded by the ssrA gene; the 2 termini fold to resemble tRNA(Ala) and it encodes a 'tag peptide', a short internal open reading frame. During trans-translation Ala-aminoacylated tmRNA acts like a tRNA, entering the A-site of stalled ribosomes, displacing the stalled mRNA. The ribosome then switches to translate the ORF on the tmRNA; the nascent peptide is terminated with the 'tag peptide' encoded by the tmRNA and targeted for degradation. The ribosome is freed to recommence translation, which seems to be the essential function of trans-translation. This is SsrA-binding protein from Wolbachia sp. subsp. Brugia malayi (strain TRS).